Consider the following 193-residue polypeptide: UPF0301 protein Fphi_1754 (193 aa).

The protein belongs to the UPF0301 (AlgH) family.

This is UPF0301 protein Fphi_1754 from Francisella philomiragia subsp. philomiragia (strain ATCC 25017 / CCUG 19701 / FSC 153 / O#319-036).